Here is a 195-residue protein sequence, read N- to C-terminus: 3-hydroxyanthranilate 3,4-dioxygenase (195 aa).

Arg-50 provides a ligand contact to O2. Residues His-54, Glu-60, and His-102 each contribute to the Fe cation site. Glu-60 is a binding site for substrate. Residues Arg-106 and Glu-116 each coordinate substrate. A divalent metal cation is bound by residues Cys-131, Cys-136, Cys-170, and Cys-173.

It belongs to the 3-HAO family. It depends on Fe(2+) as a cofactor.

The protein resides in the cytoplasm. It carries out the reaction 3-hydroxyanthranilate + O2 = (2Z,4Z)-2-amino-3-carboxymuconate 6-semialdehyde. Its pathway is cofactor biosynthesis; NAD(+) biosynthesis; quinolinate from L-kynurenine: step 3/3. Functionally, catalyzes the oxidative ring opening of 3-hydroxyanthranilate to 2-amino-3-carboxymuconate semialdehyde, which spontaneously cyclizes to quinolinate. In Aspergillus terreus (strain NIH 2624 / FGSC A1156), this protein is 3-hydroxyanthranilate 3,4-dioxygenase (bna1).